Here is a 142-residue protein sequence, read N- to C-terminus: Hemoglobin subunit alpha-1 (142 aa).

The Globin domain maps to 2–142 (VLSADDKSNV…VSTVLTSKYR (141 aa)). Position 59 (His-59) interacts with O2. His-88 contributes to the heme b binding site.

The protein belongs to the globin family. In terms of assembly, heterotetramer of two alpha chains and two beta chains. Red blood cells.

Functionally, involved in oxygen transport from the lung to the various peripheral tissues. In terms of biological role, hemopressin acts as an antagonist peptide of the cannabinoid receptor CNR1. Hemopressin-binding efficiently blocks cannabinoid receptor CNR1 and subsequent signaling. This chain is Hemoglobin subunit alpha-1 (HBA1), found in Equus quagga burchellii (Burchell's zebra).